The sequence spans 145 residues: MFGIFSKGEPVSMEGELVQPSSIVINDYEEELHLPLSYWDIKDYKNSWLKSLGEGLSNKTHSALAVSMYEPEKTNFIFTWVLYFEDEKVYVQNNVIFLEECHGFSPENINKFIESRTTHDGDGMKISEWHTDLNSVLDFYHSLNN.

As to quaternary structure, interacts with cognate toxin fragment CdiA-CT.

Functionally, immunity protein component of a toxin-immunity protein module, which functions as a cellular contact-dependent growth inhibition (CDI) system. CDI modules allow bacteria to communicate with and inhibit the growth of closely related neighboring bacteria in a contact-dependent fashion. Protects cells against the 16S rRNase activity of CdiA-CT, its cognate toxin protein, but not against the toxic effects of a similar rRNase, non-cognate CdiA-CT from E.chrysanthemi strain EC16. This Enterobacter cloacae subsp. cloacae (strain ATCC 13047 / DSM 30054 / NBRC 13535 / NCTC 10005 / WDCM 00083 / NCDC 279-56) protein is Immunity protein CdiI.